Consider the following 111-residue polypeptide: Ghrelin (111 aa).

A signal peptide spans 1 to 26 (MRQMKRTAYIILLVCVLALWMDSVQA). Polar residues predominate over residues 28-37 (SSFLSPSQRP). A disordered region spans residues 28 to 53 (SSFLSPSQRPQGKDKKPPRVGRRDSD). Ser29 carries O-decanoyl serine; alternate lipidation. Ser29 carries O-hexanoyl serine; alternate lipidation. Residue Ser29 is the site of O-octanoyl serine; alternate attachment. Basic and acidic residues predominate over residues 38-53 (QGKDKKPPRVGRRDSD). Val47 bears the Valine amide mark. A propeptide spans 51–111 (DSDGILDLFM…DLLMDTPAKE (61 aa)) (removed in mature form).

It belongs to the motilin family. Post-translationally, O-octanoylated by GOAT/MBOAT4. O-octanoylation or O-decanoylation is essential for activity. The O-decanoylated form ghrelin-21-C10 differs in the length of the carbon backbone of the carboxylic acid forming an ester bond with Ser-29. 44% of eel ghrelin is O-decanoylated. As to expression, highest levels in stomach and anterior intestine. Lower levels in posterior intestine, kidney and brain. Low levels in heart, head kidney and middle intestine.

It localises to the secreted. Functionally, ligand for growth hormone secretagogue receptor type 1 (GHSR). Induces the release of growth hormone from the pituitary. Has an appetite-stimulating effect, induces adiposity and stimulates gastric acid secretion. Involved in growth regulation. This chain is Ghrelin (ghrl), found in Anguilla japonica (Japanese eel).